Consider the following 107-residue polypeptide: Ubiquitin-related modifier 1 (107 aa).

Glycine 107 is subject to 1-thioglycine. Residue glycine 107 forms a Glycyl lysine isopeptide (Gly-Lys) (interchain with K-? in acceptor proteins) linkage.

It belongs to the URM1 family. Post-translationally, C-terminal thiocarboxylation occurs in 2 steps, it is first acyl-adenylated (-COAMP) via the hesA/moeB/thiF part of UBA4, then thiocarboxylated (-COSH) via the rhodanese domain of UBA4.

It localises to the cytoplasm. It functions in the pathway tRNA modification; 5-methoxycarbonylmethyl-2-thiouridine-tRNA biosynthesis. In terms of biological role, acts as a sulfur carrier required for 2-thiolation of mcm(5)S(2)U at tRNA wobble positions of cytosolic tRNA(Lys), tRNA(Glu) and tRNA(Gln). Serves as sulfur donor in tRNA 2-thiolation reaction by being thiocarboxylated (-COSH) at its C-terminus by the MOCS3 homolog UBA4. The sulfur is then transferred to tRNA to form 2-thiolation of mcm(5)S(2)U. Prior mcm(5) tRNA modification by the elongator complex is required for 2-thiolation. Also acts as a ubiquitin-like protein (UBL) that is covalently conjugated via an isopeptide bond to lysine residues of target proteins such as AHP1. The thiocarboxylated form serves as substrate for conjugation and oxidative stress specifically induces the formation of UBL-protein conjugates. The protein is Ubiquitin-related modifier 1 of Mycosarcoma maydis (Corn smut fungus).